Reading from the N-terminus, the 776-residue chain is Isoamylase (776 aa).

A signal peptide spans 1 to 26 (MKCPKILAALLGCAVLAGVPAMPAHA). 5 residues coordinate Ca(2+): Asp-154, Glu-255, Thr-256, Asn-258, and Asp-285. Asp-401 serves as the catalytic Nucleophile. Cys-410 and Cys-422 are disulfide-bonded. The active-site Proton donor is Glu-461. Intrachain disulfides connect Cys-546–Cys-616 and Cys-738–Cys-766.

It belongs to the glycosyl hydrolase 13 family. As to quaternary structure, monomer. It depends on Ca(2+) as a cofactor.

It localises to the secreted. It carries out the reaction Hydrolysis of (1-&gt;6)-alpha-D-glucosidic branch linkages in glycogen, amylopectin and their beta-limit dextrins.. In Pseudomonas amyloderamosa, this protein is Isoamylase (iam).